Here is an 84-residue protein sequence, read N- to C-terminus: Transcription elongation factor 1 homolog (84 aa).

Positions 26, 29, 50, and 53 each coordinate Zn(2+).

It belongs to the ELOF1 family.

The protein resides in the nucleus. In terms of biological role, transcription elongation factor implicated in the maintenance of proper chromatin structure in actively transcribed regions. This is Transcription elongation factor 1 homolog from Caenorhabditis elegans.